A 370-amino-acid polypeptide reads, in one-letter code: Nodulation protein Z (370 aa).

One can recognise a GT23 domain in the interval 47–361 (SSNDRFVVSR…NDPGRLILIE (315 aa)).

It belongs to the glycosyltransferase 23 family.

Fucosyltransferase which adds the fucose moiety of the nod factor on its terminal reducing N-acetylglucosamine end. Uses GDP-fucose as the donor group. The sequence is that of Nodulation protein Z (nodZ) from Bradyrhizobium diazoefficiens (strain JCM 10833 / BCRC 13528 / IAM 13628 / NBRC 14792 / USDA 110).